A 108-amino-acid chain; its full sequence is MLKSNLKIDNSFSVMGVVSRLPKRLKSPSGIEHCKFLLEHRSDQIESGFTRQAWLKMPVQISGNQLIEKTQSITVGSKILVVGFITSHKTQSGLCQLVLHAEQIEFID.

Residues 8-108 form the SSB domain; sequence IDNSFSVMGV…LHAEQIEFID (101 aa).

Belongs to the PriB family. As to quaternary structure, homodimer. Interacts with PriA and DnaT. Component of the replication restart primosome. Primosome assembly occurs via a 'hand-off' mechanism. PriA binds to replication forks, subsequently PriB then DnaT bind; DnaT then displaces ssDNA to generate the helicase loading substrate.

Involved in the restart of stalled replication forks, which reloads the replicative helicase on sites other than the origin of replication; the PriA-PriB pathway is the major replication restart pathway. During primosome assembly it facilitates complex formation between PriA and DnaT on DNA; stabilizes PriA on DNA. Stimulates the DNA unwinding activity of PriA helicase. The chain is Replication restart protein PriB from Haemophilus influenzae (strain ATCC 51907 / DSM 11121 / KW20 / Rd).